The following is a 172-amino-acid chain: Small ribosomal subunit protein uS5 (172 aa).

Residues 15–78 form the S5 DRBM domain; that stretch reads LNDKLIFINR…ANAKRNLSRI (64 aa).

This sequence belongs to the universal ribosomal protein uS5 family. As to quaternary structure, part of the 30S ribosomal subunit. Contacts proteins S4 and S8.

Functionally, with S4 and S12 plays an important role in translational accuracy. Located at the back of the 30S subunit body where it stabilizes the conformation of the head with respect to the body. This is Small ribosomal subunit protein uS5 from Dehalococcoides mccartyi (strain ATCC BAA-2266 / KCTC 15142 / 195) (Dehalococcoides ethenogenes (strain 195)).